Reading from the N-terminus, the 169-residue chain is Ribosome maturation factor RimM (169 aa).

The region spanning 95 to 168 (PPDTAYIHDL…EMTIRRFDEF (74 aa)) is the PRC barrel domain.

The protein belongs to the RimM family. In terms of assembly, binds ribosomal protein uS19.

The protein resides in the cytoplasm. Functionally, an accessory protein needed during the final step in the assembly of 30S ribosomal subunit, possibly for assembly of the head region. Essential for efficient processing of 16S rRNA. May be needed both before and after RbfA during the maturation of 16S rRNA. It has affinity for free ribosomal 30S subunits but not for 70S ribosomes. The polypeptide is Ribosome maturation factor RimM (Prosthecochloris aestuarii (strain DSM 271 / SK 413)).